The sequence spans 179 residues: Large ribosomal subunit protein uL5 (179 aa).

Belongs to the universal ribosomal protein uL5 family. As to quaternary structure, part of the 50S ribosomal subunit; part of the 5S rRNA/L5/L18/L25 subcomplex. Contacts the 5S rRNA and the P site tRNA. Forms a bridge to the 30S subunit in the 70S ribosome.

In terms of biological role, this is one of the proteins that bind and probably mediate the attachment of the 5S RNA into the large ribosomal subunit, where it forms part of the central protuberance. In the 70S ribosome it contacts protein S13 of the 30S subunit (bridge B1b), connecting the 2 subunits; this bridge is implicated in subunit movement. Contacts the P site tRNA; the 5S rRNA and some of its associated proteins might help stabilize positioning of ribosome-bound tRNAs. This chain is Large ribosomal subunit protein uL5, found in Thioalkalivibrio sulfidiphilus (strain HL-EbGR7).